Reading from the N-terminus, the 329-residue chain is Peroxidase 51 (329 aa).

Positions methionine 1–alanine 25 are cleaved as a signal peptide. 4 disulfides stabilise this stretch: cysteine 36–cysteine 119, cysteine 69–cysteine 74, cysteine 125–cysteine 325, and cysteine 204–cysteine 236. Residue histidine 67 is the Proton acceptor of the active site. Positions 68, 71, 73, 75, and 77 each coordinate Ca(2+). Proline 167 lines the substrate pocket. Histidine 197 lines the heme b pocket. Threonine 198 serves as a coordination point for Ca(2+). Asparagine 215 carries N-linked (GlcNAc...) asparagine glycosylation. Aspartate 249, threonine 252, and aspartate 257 together coordinate Ca(2+).

This sequence belongs to the peroxidase family. Classical plant (class III) peroxidase subfamily. The cofactor is heme b. Ca(2+) is required as a cofactor.

The protein resides in the secreted. It catalyses the reaction 2 a phenolic donor + H2O2 = 2 a phenolic radical donor + 2 H2O. Its function is as follows. Removal of H(2)O(2), oxidation of toxic reductants, biosynthesis and degradation of lignin, suberization, auxin catabolism, response to environmental stresses such as wounding, pathogen attack and oxidative stress. These functions might be dependent on each isozyme/isoform in each plant tissue. This is Peroxidase 51 (PER51) from Arabidopsis thaliana (Mouse-ear cress).